We begin with the raw amino-acid sequence, 139 residues long: Arsenate reductase (139 aa).

Catalysis depends on nucleophile residues Cys10, Cys82, and Cys89. Intrachain disulfides connect Cys10-Cys82 and Cys82-Cys89.

Belongs to the low molecular weight phosphotyrosine protein phosphatase family. Thioredoxin-coupled ArsC subfamily.

It is found in the cytoplasm. The enzyme catalyses arsenate + [thioredoxin]-dithiol + H(+) = arsenite + [thioredoxin]-disulfide + H2O. Catalyzes the reduction of arsenate [As(V)] to arsenite [As(III)]. The protein is Arsenate reductase of Oceanobacillus iheyensis (strain DSM 14371 / CIP 107618 / JCM 11309 / KCTC 3954 / HTE831).